We begin with the raw amino-acid sequence, 61 residues long: Small ribosomal subunit protein uS14 (61 aa).

Residues cysteine 24, cysteine 27, cysteine 40, and cysteine 43 each coordinate Zn(2+).

Belongs to the universal ribosomal protein uS14 family. Zinc-binding uS14 subfamily. As to quaternary structure, part of the 30S ribosomal subunit. Contacts proteins S3 and S10. Requires Zn(2+) as cofactor.

Functionally, binds 16S rRNA, required for the assembly of 30S particles and may also be responsible for determining the conformation of the 16S rRNA at the A site. This is Small ribosomal subunit protein uS14 from Mycoplasma pneumoniae (strain ATCC 29342 / M129 / Subtype 1) (Mycoplasmoides pneumoniae).